The primary structure comprises 487 residues: Protein Optix (487 aa).

The segment at residues 154–214 (WDGEQKTHCF…KNRRQRDRAA (61 aa)) is a DNA-binding region (homeobox). 2 disordered regions span residues 182-330 (NPTK…GAGP) and 443-463 (ASVG…GYHH). The span at 255–277 (GTHSPVPSSLQLQHSPGSTSNGA) shows a compositional bias: polar residues. Positions 278–293 (NDREESLSVDDDKPRD) are enriched in basic and acidic residues. Residues 294–312 (LSGSLPLPLSLPLPLASPT) show a composition bias toward low complexity. Positions 321 to 330 (GYGGGAGAGP) are enriched in gly residues.

The protein belongs to the SIX/Sine oculis homeobox family. Expressed during early development of the head. First expressed in a band around the anterior end of stage 5 blastoderm embryo, at 93% to 85% egg length. By gastrula stage, site of expression shifts to the dorsal-anterior region. At stage 12, expression is found in the clypeolabrum, the stomodaeum, and in ectoderm dorsal to the future supraesophageal ganglion.

It localises to the nucleus. May be involved in head or eye development; development of the clypeolabrum and several head sensory organs. This is Protein Optix (Optix) from Drosophila melanogaster (Fruit fly).